Consider the following 291-residue polypeptide: Peptide methionine sulfoxide reductase MsrB/MsrA (291 aa).

One can recognise a MsrB domain in the interval 1 to 124; the sequence is MLANLQHLSD…NSAALRFVAR (124 aa). Residue cysteine 113 is the Nucleophile of the active site. Residues 127–284 form a peptide methionine sulfoxide reductase A region; the sequence is GTALFAAGCF…PGGYCHVSLH (158 aa). Cysteine 135 is an active-site residue.

The protein in the N-terminal section; belongs to the MsrB Met sulfoxide reductase family. It in the C-terminal section; belongs to the MsrA Met sulfoxide reductase family.

It carries out the reaction L-methionyl-[protein] + [thioredoxin]-disulfide + H2O = L-methionyl-(R)-S-oxide-[protein] + [thioredoxin]-dithiol. The catalysed reaction is L-methionyl-[protein] + [thioredoxin]-disulfide + H2O = L-methionyl-(S)-S-oxide-[protein] + [thioredoxin]-dithiol. It catalyses the reaction [thioredoxin]-disulfide + L-methionine + H2O = L-methionine (S)-S-oxide + [thioredoxin]-dithiol. Its function is as follows. Has an important function as a repair enzyme for proteins that have been inactivated by oxidation. Catalyzes the reversible oxidation-reduction of methionine sulfoxide in proteins to methionine. The chain is Peptide methionine sulfoxide reductase MsrB/MsrA (msrAB) from Treponema pallidum (strain Nichols).